Consider the following 98-residue polypeptide: NADH-ubiquinone oxidoreductase chain 4L (98 aa).

The next 3 helical transmembrane spans lie at 2-22, 26-46, and 61-81; these read SPIY…TLLF, LMST…MVTS, and ITML…LVMI.

Belongs to the complex I subunit 4L family. Core subunit of respiratory chain NADH dehydrogenase (Complex I) which is composed of 45 different subunits.

Its subcellular location is the mitochondrion inner membrane. The catalysed reaction is a ubiquinone + NADH + 5 H(+)(in) = a ubiquinol + NAD(+) + 4 H(+)(out). Core subunit of the mitochondrial membrane respiratory chain NADH dehydrogenase (Complex I) which catalyzes electron transfer from NADH through the respiratory chain, using ubiquinone as an electron acceptor. Part of the enzyme membrane arm which is embedded in the lipid bilayer and involved in proton translocation. This chain is NADH-ubiquinone oxidoreductase chain 4L (MT-ND4L), found in Nephelomys albigularis (Tomes's rice rat).